The primary structure comprises 343 residues: L-rhamnose-proton symporter (343 aa).

Helical transmembrane passes span 4-24 (AIILGIIWHLVGAASAACFYA), 38-58 (WSIGGLVSWLILPWTVSYLLL), 68-88 (FSIATLLPVFLFGAMWGIGNI), 101-121 (MGIGIAIGITLIIGTLMTPIL), 137-157 (TLLGVFVALIGVAIVSYAGLL), 175-195 (LILAVMCGIFSAGMSFAMDAA), 207-227 (INSLYVALPSYVIIMGGGAII), 254-274 (LLITNILFSALAGLMWYLQFF), 289-309 (MSWMLHMSFYVLCGGIVGLLL), and 320-340 (VAVLCIGCLVIILAANIVGLG).

The protein belongs to the L-rhamnose transporter (TC 2.A.7.6) family.

It is found in the cell inner membrane. The catalysed reaction is L-rhamnopyranose(in) + H(+)(in) = L-rhamnopyranose(out) + H(+)(out). In terms of biological role, uptake of L-rhamnose across the cytoplasmic membrane with the concomitant transport of protons into the cell (symport system). The protein is L-rhamnose-proton symporter of Yersinia pestis bv. Antiqua (strain Antiqua).